A 101-amino-acid polypeptide reads, in one-letter code: MSKVSPTETERCIESLLAVFQRYAGREGDNLKLSKKEFRTFMNTELASFTKNQKDPAVVDRMMKRLDINSDGQLDFQEFLNLIGGIAVACHDALLVQPPHP.

2 EF-hand domains span residues 13–48 (IESL…ELAS) and 54–89 (KDPA…IAVA). Positions 30, 32, 37, 67, 69, 71, 73, and 78 each coordinate Ca(2+).

It belongs to the S-100 family. As to quaternary structure, homodimer; disulfide-linked. In terms of tissue distribution, smooth muscle and non-muscle tissues.

The polypeptide is Protein S100-A11 (S100A11) (Gallus gallus (Chicken)).